Consider the following 257-residue polypeptide: Type III pantothenate kinase (257 aa).

Position 5 to 12 (5 to 12) interacts with ATP; the sequence is DIGNTNIK. Residue 107–110 participates in substrate binding; the sequence is GSDR. Asp109 serves as the catalytic Proton acceptor. ATP is bound at residue Thr133.

The protein belongs to the type III pantothenate kinase family. As to quaternary structure, homodimer. NH4(+) serves as cofactor. The cofactor is K(+).

Its subcellular location is the cytoplasm. The catalysed reaction is (R)-pantothenate + ATP = (R)-4'-phosphopantothenate + ADP + H(+). It participates in cofactor biosynthesis; coenzyme A biosynthesis; CoA from (R)-pantothenate: step 1/5. In terms of biological role, catalyzes the phosphorylation of pantothenate (Pan), the first step in CoA biosynthesis. This chain is Type III pantothenate kinase, found in Ehrlichia ruminantium (strain Welgevonden).